The sequence spans 509 residues: Movement protein (509 aa).

The protein resides in the host cell junction. The protein localises to the host plasmodesma. Its subcellular location is the host cytoplasm. Functionally, transports viral genome to neighboring plant cells directly through plasmosdesmata, without any budding. The movement protein allows efficient cell to cell propagation, by bypassing the host cell wall barrier. In Rice dwarf virus (isolate Fujian) (RDV), this protein is Movement protein.